A 793-amino-acid chain; its full sequence is Probable phosphoketolase (793 aa).

Belongs to the XFP family. The cofactor is thiamine diphosphate.

This Gloeobacter violaceus (strain ATCC 29082 / PCC 7421) protein is Probable phosphoketolase.